Here is a 143-residue protein sequence, read N- to C-terminus: Small ribosomal subunit protein uS11c (143 aa).

It belongs to the universal ribosomal protein uS11 family. As to quaternary structure, part of the 30S ribosomal subunit.

Its subcellular location is the plastid. The protein resides in the chloroplast. The polypeptide is Small ribosomal subunit protein uS11c (Zea mays (Maize)).